The following is a 457-amino-acid chain: Carboxypeptidase N catalytic chain (457 aa).

The N-terminal stretch at 1–23 (MPDLPSAFLPLLLLSKFVTPVTF) is a signal peptide. A Peptidase M14 domain is found at 24 to 338 (RHHRYDDLVR…EALIQFLEQV (315 aa)). C42 and C104 form a disulfide bridge. Positions 86, 89, and 216 each coordinate Zn(2+). C271 and C311 form a disulfide bridge. The Proton donor/acceptor role is filled by E308. Residues T400, T402, and T409 are each glycosylated (O-linked (GalNAc...) threonine). A disordered region spans residues 418 to 457 (STTQVHPVQKAPGRGQGSRAKQPRTSRKKDQAAKRHRGPA).

The protein belongs to the peptidase M14 family. In terms of assembly, tetramer of two catalytic chains and two glycosylated inactive chains. Zn(2+) is required as a cofactor. As to expression, plasma. Expressed in liver.

The protein resides in the secreted. Its subcellular location is the extracellular space. It catalyses the reaction Release of a C-terminal basic amino acid, preferentially lysine.. In terms of biological role, protects the body from potent vasoactive and inflammatory peptides containing C-terminal Arg or Lys (such as kinins or anaphylatoxins) which are released into the circulation. The polypeptide is Carboxypeptidase N catalytic chain (Cpn1) (Rattus norvegicus (Rat)).